Reading from the N-terminus, the 457-residue chain is Argininosuccinate lyase (457 aa).

The protein belongs to the lyase 1 family. Argininosuccinate lyase subfamily.

It localises to the cytoplasm. It carries out the reaction 2-(N(omega)-L-arginino)succinate = fumarate + L-arginine. The protein operates within amino-acid biosynthesis; L-arginine biosynthesis; L-arginine from L-ornithine and carbamoyl phosphate: step 3/3. In Psychrobacter cryohalolentis (strain ATCC BAA-1226 / DSM 17306 / VKM B-2378 / K5), this protein is Argininosuccinate lyase.